A 107-amino-acid chain; its full sequence is Iron-binding protein IscA (107 aa).

C35, C99, and C101 together coordinate Fe cation.

This sequence belongs to the HesB/IscA family. As to quaternary structure, homodimer; may form tetramers and higher multimers. Fe cation serves as cofactor.

Its function is as follows. Is able to transfer iron-sulfur clusters to apo-ferredoxin. Multiple cycles of [2Fe2S] cluster formation and transfer are observed, suggesting that IscA acts catalytically. Recruits intracellular free iron so as to provide iron for the assembly of transient iron-sulfur cluster in IscU in the presence of IscS, L-cysteine and the thioredoxin reductase system TrxA/TrxB. This Pectobacterium carotovorum subsp. carotovorum (strain PC1) protein is Iron-binding protein IscA.